Consider the following 186-residue polypeptide: Peptidyl-tRNA hydrolase (186 aa).

Residue Y14 coordinates tRNA. H19 acts as the Proton acceptor in catalysis. Y64, N66, and N112 together coordinate tRNA.

It belongs to the PTH family. Monomer.

The protein localises to the cytoplasm. It carries out the reaction an N-acyl-L-alpha-aminoacyl-tRNA + H2O = an N-acyl-L-amino acid + a tRNA + H(+). In terms of biological role, hydrolyzes ribosome-free peptidyl-tRNAs (with 1 or more amino acids incorporated), which drop off the ribosome during protein synthesis, or as a result of ribosome stalling. Functionally, catalyzes the release of premature peptidyl moieties from peptidyl-tRNA molecules trapped in stalled 50S ribosomal subunits, and thus maintains levels of free tRNAs and 50S ribosomes. This chain is Peptidyl-tRNA hydrolase, found in Bacillus cereus (strain Q1).